Consider the following 108-residue polypeptide: Abdominal ganglion neuropeptide R3-14 (108 aa).

The signal sequence occupies residues 1-23 (MQVLHLCLAVSIAVALLSQAAWS). Pyrrolidone carboxylic acid (Glu); partial is present on residues Glu24 and Glu52. Gln66 is subject to Pyrrolidone carboxylic acid.

In terms of processing, the partial formation of pyroglutamate from N-terminal glutamic acid in peptides isolated from single cells is detected by mass spectrometry. There are indications this modification depends on a heat sensitive factor. In terms of tissue distribution, neurons R3-R14. A cluster of 12 giant neurons located on the right side of the abdominal ganglion.

It localises to the secreted. Functionally, HRBP is a myoactive peptide that excites Aplysia heart and enhances gut motility in vitro. The protein is Abdominal ganglion neuropeptide R3-14 of Aplysia californica (California sea hare).